Reading from the N-terminus, the 128-residue chain is Fluoride-specific ion channel FluC (128 aa).

The next 4 helical transmembrane spans lie at 5 to 25 (LFISCGAILGASLRWAIGLLF), 34 to 54 (FGALIANLLGCLIIGVLLGLF), 67 to 87 (FLITGFLGSLTTFSSFSSEVV), and 99 to 119 (FCVLMMHLFGCLAMTVLGIWI). 2 residues coordinate Na(+): glycine 74 and threonine 77.

Belongs to the fluoride channel Fluc/FEX (TC 1.A.43) family.

It localises to the cell inner membrane. It carries out the reaction fluoride(in) = fluoride(out). With respect to regulation, na(+) is not transported, but it plays an essential structural role and its presence is essential for fluoride channel function. In terms of biological role, fluoride-specific ion channel. Important for reducing fluoride concentration in the cell, thus reducing its toxicity. In Haemophilus influenzae (strain PittEE), this protein is Fluoride-specific ion channel FluC.